The sequence spans 1122 residues: Desmoglein-2 (1122 aa).

The first 28 residues, 1–28 (MARSPGDRCALLLLVQLLAVVCLDFGNG), serve as a signal peptide directing secretion. A propeptide spanning residues 29-54 (LHLEVFSPRNEGKPFPKHTHLVRQKR) is cleaved from the precursor. Cadherin domains follow at residues 55–164 (AWIT…EPVF), 165–277 (TQEV…IPVV), 278–398 (ENKM…SSVV), and 397–504 (VVSF…CPVL). Residues 55–618 (AWITAPVALR…YDNYVGLGPA (564 aa)) lie on the Extracellular side of the membrane. The N-linked (GlcNAc...) asparagine glycan is linked to N117. N-linked (GlcNAc...) asparagine glycosylation is found at N314, N467, and N519. A helical transmembrane segment spans residues 619–639 (AIALMILALLLLLLVPLLLLI). Residues 640–1122 (CHCGGGAKGF…KHSTMQHSYS (483 aa)) lie on the Cytoplasmic side of the membrane. 4 positions are modified to phosphoserine: S685, S706, S709, and S729. At T808 the chain carries Phosphothreonine. 3 positions are modified to phosphoserine: S810, S814, and S819. Desmoglein repeat repeat units follow at residues 885-916 (AYSS…ESSV), 917-945 (SSRQ…SYAK), 946-971 (GSAV…ERVY), 972-995 (APTS…ERVI), 996-1024 (QPNG…ERES), and 1025-1055 (ILAP…ERIL). Positions 913–932 (ESSVSSRQSQKVVPPPDPVA) are disordered. Low complexity predominate over residues 914–924 (SSVSSRQSQKV). Residues 1089–1122 (LPNLDLEESDRPNSTITTSSTRVTKHSTMQHSYS) form a disordered region. The span at 1100–1122 (PNSTITTSSTRVTKHSTMQHSYS) shows a compositional bias: polar residues. S1122 bears the Phosphoserine mark.

As to quaternary structure, interacts with PKP2. Interacts with CTNNB1; the interaction promotes localization of CTNNB1 at cell junctions thus reducing its nuclear localization and subsequent transcription of CTNNB1/TCF-target genes. In terms of processing, palmitoylated by ZDHHC5 at the plasma membrane. In terms of tissue distribution, expressed in undifferentiated pluripotent stem cells, expression decreases during differentiation (at protein level). Expressed by embryonic stem cells, expression is reduced during differentiation (at protein level). Expressed at the apical-lateral cell membrane of kidney tubular epithelial cells (at protein level). Expressed in epidermis and heart (at protein level). Expressed in the brain, spleen, lung, liver skeletal muscle, kidney and testis.

It is found in the cell membrane. The protein localises to the cell junction. The protein resides in the desmosome. It localises to the cytoplasm. A component of desmosome cell-cell junctions which are required for positive regulation of cellular adhesion. Involved in the interaction of plaque proteins and intermediate filaments mediating cell-cell adhesion. Required for proliferation and viability of embryonic stem cells in the blastocyst, thereby crucial for progression of post-implantation embryonic development. Maintains pluripotency by regulating epithelial to mesenchymal transition/mesenchymal to epithelial transition (EMT/MET) via interacting with and sequestering CTNNB1 to sites of cell-cell contact, thereby reducing translocation of CTNNB1 to the nucleus and subsequent transcription of CTNNB1/TCF-target genes. Promotes pluripotency and the multi-lineage differentiation potential of hematopoietic stem cells. Plays a role in endothelial cell sprouting and elongation via mediating the junctional-association of cortical actin fibers and CDH5. Plays a role in limiting inflammatory infiltration and the apoptotic response to injury in kidney tubular epithelial cells, potentially via its role in maintaining cell-cell adhesion and the epithelial barrier. The chain is Desmoglein-2 (Dsg2) from Mus musculus (Mouse).